Here is a 662-residue protein sequence, read N- to C-terminus: ATP-dependent RNA helicase DDX3X (662 aa).

Ser2 is subject to N-acetylserine. The interval 2-139 (SHVAVENALG…KSDEDDWSKP (138 aa)) is required for TBK1 and IKBKE-dependent IFNB1 activation. A Nuclear export signal motif is present at residues 12-21 (LDQQFAGLDL). The disordered stretch occupies residues 19–144 (LDLNSSDNQS…DWSKPLPPSE (126 aa)). The span at 21 to 34 (LNSSDNQSGGSTAS) shows a compositional bias: polar residues. The interval 38 to 44 (YIPPHLR) is interaction with EIF4E. Residues 44-68 (RNREATKGFYDKDSSGWSSSKDKDA) are compositionally biased toward basic and acidic residues. Lys55 carries the N6-acetyllysine modification. Residues Ser82 and Ser90 each carry the phosphoserine modification. Residues 94-130 (GRFDDRGRGDYDGIGGRGDRSGFGKFERGGNSRWCDK) are compositionally biased toward basic and acidic residues. The tract at residues 100 to 110 (GRGDYDGIGGR) is interaction with IKBKE. Residues 100 to 662 (GRGDYDGIGG…NSQGVDWWGN (563 aa)) form an interaction with GSK3B region. Residue Arg101 is modified to Omega-N-methylarginine. Phosphotyrosine is present on Tyr104. Arg110 carries the post-translational modification Omega-N-methylarginine. Residue Lys118 is modified to N6-acetyllysine. Position 131 is a phosphoserine (Ser131). An interaction with CHUK region spans residues 139–172 (PLPPSERLEQELFSGGNTGINFEKYDDIPVEATG). The Q motif signature appears at 180 to 208 (ESFSDVEMGEIIMGNIELTRYTRPTPVQK). The residue at position 183 (Ser183) is a Phosphoserine. 200 to 207 (YTRPTPVQ) contributes to the ATP binding site. Residues 211-403 (IPIIKEKRDL…RDFLDEYIFL (193 aa)) enclose the Helicase ATP-binding domain. Residue Lys215 forms a Glycyl lysine isopeptide (Lys-Gly) (interchain with G-Cter in SUMO2) linkage. An ATP-binding site is contributed by 224–231 (AQTGSGKT). The tract at residues 250 to 259 (ALRAMKENGR) is involved in stimulation of ATPase activity by DNA and RNA, nucleic acid binding and unwinding. The DEAD box motif lies at 347–350 (DEAD). Positions 414 to 575 (NITQKVVWVE…EVPSWLENMA (162 aa)) constitute a Helicase C-terminal domain. Phosphoserine is present on Ser456. The interval 536-661 (GNLGLATSFF…YNSQGVDWWG (126 aa)) is interaction with NXF1. Omega-N-methylarginine is present on Arg592. 3 positions are modified to phosphoserine: Ser594, Ser605, and Ser612. Positions 601–633 (DYRQSSGASSSSFSSSRASSSRSGGGGHGGSRG) are disordered. Positions 604-622 (QSSGASSSSFSSSRASSSR) are enriched in low complexity. Omega-N-methylarginine occurs at positions 617 and 632. Residues 623–633 (SGGGGHGGSRG) are compositionally biased toward gly residues.

This sequence belongs to the DEAD box helicase family. DDX3/DED1 subfamily. Homodimer; can bind RNA as a monomer and as a dimer/oligomer. Interacts with TDRD3. When phosphorylated, interacts with IRF3; the interaction facilitates the phosphorylation and activation of IRF3 by IKBKE. Directly interacts with XPO1/CRM1. The interaction with XPO1/CMR1 is dependent on the DDX3X nuclear export signal motif and XPO1 interaction with GTPase RAN in its active GTP-bound form. Weakly interacts with TBKBP1/SINTBAD. Directly interacts with TRAF3; this interaction stimulates TRAF3 'Lys-63' ubiquitination. Interacts with CSNK1E in a Wnt-dependent manner; this interaction greatly enhances CSNK1E affinity for ATP, stimulates its kinase activity and promotes CSNK1E-mediated DVL2 phosphorylation. In the presence of RNA, the interaction is decreased. Also interacts with CSNK1D and stimulates its kinase activity. Interacts with TRPV4; this interaction is decreased when the TRPV4 channel is activated, leading to DDX3X relocalization to the nucleus. Interacts with MAP3K14/NIK. Directly interacts with CHUK/IKKA after physiological activation of the TLR7 and TLR8 pathways; this interaction enhances CHUK autophosphorylation. May associate with EIF4F complex, composed of at least EIF4A, EIF4E and EIF4G1/EIF4G3. Directly interacts with EIF4E in an RNA-independent manner; this interaction enhances EIF4E cap-binding ability. Directly interacts with EIF4G1 in an RNA-independent manner. DDX3X competes with EIF4G1 for interaction with EIF4E. Interacts with EIF4A1 and EIF2S1 in an RNA-independent manner. Associates with the eukaryotic translation initiation factor 3 (eIF-3) complex, including with EIF3B and EIF3C subunits. Directly interacts with IKBKE/IKKE; this interaction stimulates IKBKE activating autophosphorylation and is induced upon viral infection. Interacts with TBK1. Interacts with SP1; this interaction potentiates SP1-induced CDKN1A/WAF1/CIP1 transcription. Interacts with GSK3A and GSK3B. Interacts with several death receptors, inclusing FAS, TNFRSF10A and TNFRSF10B. Recruited to TNFRSF10B in the absence of receptor stimulation. When TNFRSF10B is stimulated, further recruited to the receptor and cleaved by caspases. A large proteolytic fragment remains associated with TNFRSF10B. Interacts (via C-terminus) with NXF1/TAP; this interaction may be partly involved in DDX3X nuclear export and in NXF1 localization to stress granules. Identified in an mRNP complex, composed of at least DHX9, DDX3X, ELAVL1, HNRNPU, IGF2BP1/2, ILF3, PABPC1, PCBP2, PTBP2, STAU1, STAU2, SYNCRIP and YBX1. The interaction with IGF2BP1/2 is RNA-dependent. Directly interacts with PABPC1/PABP1 in an RNA-independent manner. This interaction increases in stressed cells and decreases during cell recovery. Interacts (via C-terminus) with MAVS/IPS-1; this interaction potentiates MAVS-mediated IFNB induction. Interacts with ERCC6/CBS. Interacts with DHX33 in an RNA-independent manner. Interacts with DDX5 in the cytoplasm; this interaction may be more efficient when both proteins are unphosphorylated. Interacts with RIGI. Interacts with IFIH1/MDA5. Interacts with NCAPH; this interaction may be important for the NCAPH localization at condensing chromosomes during mitosis. Interacts with NLRP3 (via NACHT domain) under inflammasome-activating conditions. Interacts with CAPRIN1. Interacts with HNF4A and NR0B2/SHP in an RNA-independent manner; this interaction disrupts the interaction between HNF4 and NR0B2 that forms inactive heterodimers and enhances the formation of active HNF4 homodimers. Interacts with CREBBP/CBP. Interacts with EP300/p300. Interacts with gamma-tubulin. Interacts with phosphorylated TP53. Directly interacts with RELA/p65; this interaction may trap RELA in the cytoplasm, impairing nuclear relocalization upon TNF activating signals. In terms of processing, phosphorylated by TBK1; the phosphorylation is required for the synergistic induction of IFNB mediated by TBK1 and DDX3X. Phosphorylated by IKBKE. Also phosphorylated by CSNK1E; this phosphorylation may inhibit RNA-stimulated ATPase activity. Post-translationally, upon stimulation of death receptors, including TNFRSF10B, recruited to receptors and cleaved by caspases. Proteolytic fragments remain associated with the receptors. This cleavage presumably inactivates DDX3X anti-apoptotic function. Ubiquitinated by RNF39 via 'Lys-48'-linked ubiquitination; leading to proteasomal degradation. Expressed in ovary, including in germinal vesicle immature and metaphase II (MII) stage oocytes (at protein level). In the brain, expressed in the granule cells of the cerebellum and dentate gyrus, the pyramidal cells of the hippocampus, the ependymal cells lining the ventricles, choroid plexi and olfactory bulb. Also accumulates in the thalamic nuclei, the dorsal region of the colliculi and the pontine nucleus.

The protein resides in the cell membrane. It is found in the nucleus. Its subcellular location is the cytoplasm. It localises to the stress granule. The protein localises to the inflammasome. The protein resides in the cell projection. It is found in the lamellipodium. It catalyses the reaction ATP + H2O = ADP + phosphate + H(+). In terms of biological role, multifunctional ATP-dependent RNA helicase. The ATPase activity can be stimulated by various ribo-and deoxynucleic acids indicative for a relaxed substrate specificity. In vitro can unwind partially double-stranded DNA with a preference for 5'-single-stranded DNA overhangs. Binds RNA G-quadruplex (rG4s) structures, including those located in the 5'-UTR of NRAS mRNA. Involved in many cellular processes, which do not necessarily require its ATPase/helicase catalytic activities. Involved in transcription regulation. Positively regulates CDKN1A/WAF1/CIP1 transcription in an SP1-dependent manner, hence inhibits cell growth. This function requires its ATPase, but not helicase activity. CDKN1A up-regulation may be cell-type specific. Binds CDH1/E-cadherin promoter and represses its transcription. Potentiates HNF4A-mediated MTTP transcriptional activation; this function requires ATPase, but not helicase activity. Facilitates HNF4A acetylation, possibly catalyzed by CREBBP/EP300, thereby increasing the DNA-binding affinity of HNF4 to its response element. In addition, disrupts the interaction between HNF4 and SHP that forms inactive heterodimers and enhances the formation of active HNF4 homodimers. By promoting HNF4A-induced MTTP expression, may play a role in lipid homeostasis. May positively regulate TP53 transcription. Associates with mRNPs, predominantly with spliced mRNAs carrying an exon junction complex (EJC). Involved in the regulation of translation initiation. Not involved in the general process of translation, but promotes efficient translation of selected complex mRNAs, containing highly structured 5'-untranslated regions (UTR). This function depends on helicase activity. Might facilitate translation by resolving secondary structures of 5'-UTRs during ribosome scanning. Alternatively, may act prior to 43S ribosomal scanning and promote 43S pre-initiation complex entry to mRNAs exhibiting specific RNA motifs, by performing local remodeling of transcript structures located close to the cap moiety. Independently of its ATPase activity, promotes the assembly of functional 80S ribosomes and disassembles from ribosomes prior to the translation elongation process. Positively regulates the translation of cyclin E1/CCNE1 mRNA and consequently promotes G1/S-phase transition during the cell cycle. May activate TP53 translation. Required for endoplasmic reticulum stress-induced ATF4 mRNA translation. Independently of its ATPase/helicase activity, enhances IRES-mediated translation; this activity requires interaction with EIF4E. Independently of its ATPase/helicase activity, has also been shown specifically repress cap-dependent translation, possibly by acting on translation initiation factor EIF4E. Involved in innate immunity, acting as a viral RNA sensor. Binds viral RNAs and promotes the production of type I interferon (IFN-alpha and IFN-beta). Potentiate MAVS/RIGI-mediated induction of IFNB in early stages of infection. Enhances IFNB1 expression via IRF3/IRF7 pathway and participates in NFKB activation in the presence of MAVS and TBK1. Involved in TBK1 and IKBKE-dependent IRF3 activation leading to IFNB induction, acts as a scaffolding adapter that links IKBKE and IRF3 and coordinates their activation. Involved in the TLR7/TLR8 signaling pathway leading to type I interferon induction, including IFNA4 production. In this context, acts as an upstream regulator of IRF7 activation by MAP3K14/NIK and CHUK/IKKA. Stimulates CHUK autophosphorylation and activation following physiological activation of the TLR7 and TLR8 pathways, leading to MAP3K14/CHUK-mediated activatory phosphorylation of IRF7. Also stimulates MAP3K14/CHUK-dependent NF-kappa-B signaling. Negatively regulates TNF-induced IL6 and IL8 expression, via the NF-kappa-B pathway. May act by interacting with RELA/p65 and trapping it in the cytoplasm. May also bind IFNB promoter; the function is independent of IRF3. Involved in both stress and inflammatory responses. Independently of its ATPase/helicase activity, required for efficient stress granule assembly through its interaction with EIF4E, hence promotes survival in stressed cells. Independently of its helicase activity, regulates NLRP3 inflammasome assembly through interaction with NLRP3 and hence promotes cell death by pyroptosis during inflammation. This function is independent of helicase activity. Therefore DDX3X availability may be used to interpret stress signals and choose between pro-survival stress granules and pyroptotic NLRP3 inflammasomes and serve as a live-or-die checkpoint in stressed cells. In association with GSK3A/B, negatively regulates extrinsic apoptotic signaling pathway via death domain receptors, including TNFRSF10B, slowing down the rate of CASP3 activation following death receptor stimulation. Cleavage by caspases may inactivate DDX3X and relieve the inhibition. Independently of its ATPase/helicase activity, allosteric activator of CSNK1E. Stimulates CSNK1E-mediated phosphorylation of DVL2, thereby involved in the positive regulation of Wnt/beta-catenin signaling pathway. Also activates CSNK1A1 and CSNK1D in vitro, but it is uncertain if these targets are physiologically relevant. ATPase and casein kinase-activating functions are mutually exclusive. May be involved in mitotic chromosome segregation. The sequence is that of ATP-dependent RNA helicase DDX3X (Ddx3x) from Mus musculus (Mouse).